The following is a 414-amino-acid chain: Translation initiation factor 2 subunit gamma (414 aa).

One can recognise a tr-type G domain in the interval 7-204 (QPEVNIGLVG…ALQTEIATPD (198 aa)). The G1 stretch occupies residues 16 to 23 (GHVDHGKT). The Mg(2+) site is built by Asp-19, Thr-23, Gly-44, and Ser-46. Residue 19–24 (DHGKTT) participates in GTP binding. A G2 region spans residues 44–48 (GISIR). Residues 91–94 (DAPG) are G3. GTP contacts are provided by residues 147-150 (NKVD) and 182-184 (SAE). Residues 147–150 (NKVD) are G4. The segment at 182-184 (SAE) is G5.

This sequence belongs to the TRAFAC class translation factor GTPase superfamily. Classic translation factor GTPase family. EIF2G subfamily. As to quaternary structure, heterotrimer composed of an alpha, a beta and a gamma chain. Requires Mg(2+) as cofactor.

The enzyme catalyses GTP + H2O = GDP + phosphate + H(+). Its function is as follows. eIF-2 functions in the early steps of protein synthesis by forming a ternary complex with GTP and initiator tRNA. The polypeptide is Translation initiation factor 2 subunit gamma (Halobacterium salinarum (strain ATCC 29341 / DSM 671 / R1)).